Here is a 387-residue protein sequence, read N- to C-terminus: Patatin-13 (387 aa).

The first 23 residues, 1-23 (MATTKSVLVLIFMILATTSSTFA), serve as a signal peptide directing secretion. In terms of domain architecture, PNPLA spans 32–230 (LSVDGGGIKG…TVADPALLSV (199 aa)). Residues 36-41 (GGGIKG) carry the GXGXXG motif. Residues 75 to 79 (GTSTG) carry the GXSXG motif. S77 (nucleophile) is an active-site residue. Residues N115 and N203 are each glycosylated (N-linked (GlcNAc...) asparagine). D216 functions as the Proton acceptor in the catalytic mechanism. A DGA/G motif is present at residues 216–218 (DGA). The stretch at 361 to 385 (ETYEEALKRFAKLLSDRKKLRANKA) forms a coiled coil.

The protein belongs to the patatin family. Tuber.

The protein resides in the vacuole. In terms of biological role, probable lipolytic acyl hydrolase (LAH), an activity which is thought to be involved in the response of tubers to pathogens. The polypeptide is Patatin-13 (Solanum tuberosum (Potato)).